Here is a 494-residue protein sequence, read N- to C-terminus: Guanosine-5'-triphosphate,3'-diphosphate pyrophosphatase (494 aa).

Belongs to the GppA/Ppx family. GppA subfamily.

The enzyme catalyses guanosine 3'-diphosphate 5'-triphosphate + H2O = guanosine 3',5'-bis(diphosphate) + phosphate + H(+). Its pathway is purine metabolism; ppGpp biosynthesis; ppGpp from GTP: step 2/2. Catalyzes the conversion of pppGpp to ppGpp. Guanosine pentaphosphate (pppGpp) is a cytoplasmic signaling molecule which together with ppGpp controls the 'stringent response', an adaptive process that allows bacteria to respond to amino acid starvation, resulting in the coordinated regulation of numerous cellular activities. The sequence is that of Guanosine-5'-triphosphate,3'-diphosphate pyrophosphatase from Shigella flexneri serotype 5b (strain 8401).